The following is a 194-amino-acid chain: Imidazoleglycerol-phosphate dehydratase (194 aa).

This sequence belongs to the imidazoleglycerol-phosphate dehydratase family.

The protein localises to the cytoplasm. The catalysed reaction is D-erythro-1-(imidazol-4-yl)glycerol 3-phosphate = 3-(imidazol-4-yl)-2-oxopropyl phosphate + H2O. The protein operates within amino-acid biosynthesis; L-histidine biosynthesis; L-histidine from 5-phospho-alpha-D-ribose 1-diphosphate: step 6/9. In Ruminiclostridium cellulolyticum (strain ATCC 35319 / DSM 5812 / JCM 6584 / H10) (Clostridium cellulolyticum), this protein is Imidazoleglycerol-phosphate dehydratase.